The sequence spans 710 residues: DNA ligase (710 aa).

A disordered region spans residues 1 to 36 (MTSSSPRHADPDENPYVEAPPTDFEPVGALSEDEAT). NAD(+) is bound by residues 63–67 (DETYD), 111–112 (SI), and E147. The active-site N6-AMP-lysine intermediate is K149. NAD(+)-binding residues include R170, E206, and K353. C444, C447, C460, and C466 together coordinate Zn(2+). The BRCT domain occupies 623–710 (ETGDALDGLT…ERGVAWPPEE (88 aa)). The interval 657 to 689 (ATSSVSGNTDYLVAGESPGRSKRDDADAEGVPV) is disordered.

It belongs to the NAD-dependent DNA ligase family. LigA subfamily. Mg(2+) serves as cofactor. Requires Mn(2+) as cofactor.

The catalysed reaction is NAD(+) + (deoxyribonucleotide)n-3'-hydroxyl + 5'-phospho-(deoxyribonucleotide)m = (deoxyribonucleotide)n+m + AMP + beta-nicotinamide D-nucleotide.. In terms of biological role, DNA ligase that catalyzes the formation of phosphodiester linkages between 5'-phosphoryl and 3'-hydroxyl groups in double-stranded DNA using NAD as a coenzyme and as the energy source for the reaction. It is essential for DNA replication and repair of damaged DNA. This Halorubrum lacusprofundi (strain ATCC 49239 / DSM 5036 / JCM 8891 / ACAM 34) protein is DNA ligase.